The following is a 143-amino-acid chain: Potassium voltage-gated channel subfamily E regulatory beta subunit 5 (143 aa).

Asn-2 and Asn-25 each carry an N-linked (GlcNAc...) asparagine glycan. The chain crosses the membrane as a helical span at residues 61–81 (LYILLIMIFYACLAGGLILAY). At 82-143 (TRSRKLVEAK…PALAQGAERV (62 aa)) the chain is on the cytoplasmic side.

Belongs to the potassium channel KCNE family. As to quaternary structure, interacts with KCNQ1; impairs KCNQ1 localization in lipid rafts and only conducts current upon strong and continued depolarization. As to expression, detected in embryonal dorsal root and nerve ganglia, in the somites and in myoepicardial layer of the developing heart wall. Detected at lower levels in the central nervous system (CNS) and in developing limb.

It localises to the membrane. Potassium channel ancillary subunit that is essential for generation of some native K(+) currents by virtue of formation of heteromeric ion channel complex with voltage-gated potassium (Kv) channel pore-forming alpha subunits. Functions as an inhibitory beta-subunit of the repolarizing cardiac potassium ion channel KCNQ1. In Mus musculus (Mouse), this protein is Potassium voltage-gated channel subfamily E regulatory beta subunit 5 (Kcne5).